We begin with the raw amino-acid sequence, 465 residues long: Iron-sulfur cluster assembly SufBD family protein SH2035 (465 aa).

This sequence belongs to the iron-sulfur cluster assembly SufBD family.

The chain is Iron-sulfur cluster assembly SufBD family protein SH2035 from Staphylococcus haemolyticus (strain JCSC1435).